The following is a 594-amino-acid chain: Ferredoxin--nitrite reductase, chloroplastic (594 aa).

The N-terminal 32 residues, 1 to 32 (MASLPVNKIIPSSTTLLSSSNNNRRRNNSSIR), are a transit peptide targeting the chloroplast. Residues 13–22 (STTLLSSSNN) are compositionally biased toward low complexity. Residues 13–36 (STTLLSSSNNNRRRNNSSIRCQKA) are disordered. The [4Fe-4S] cluster site is built by Cys-473, Cys-479, Cys-514, and Cys-518. Residue Cys-518 coordinates siroheme.

It belongs to the nitrite and sulfite reductase 4Fe-4S domain family. As to quaternary structure, monomer. Requires siroheme as cofactor. [4Fe-4S] cluster is required as a cofactor.

It localises to the plastid. The protein resides in the chloroplast. It carries out the reaction 6 oxidized [2Fe-2S]-[ferredoxin] + NH4(+) + 2 H2O = nitrite + 6 reduced [2Fe-2S]-[ferredoxin] + 8 H(+). Its pathway is nitrogen metabolism; nitrate reduction (assimilation). The protein is Ferredoxin--nitrite reductase, chloroplastic (NIR) of Spinacia oleracea (Spinach).